A 265-amino-acid chain; its full sequence is Adenosylcobinamide-GDP ribazoletransferase (265 aa).

5 helical membrane passes run 59 to 79, 113 to 133, 141 to 161, 183 to 203, and 206 to 226; these read LSWILPIEISIILGMILSVLI, IGTFGSIGLILSLGLKYLLLV, WIFLFTSWFSHSASRWFALLL, LPPFDFALSTFFGCFPAVYFL, and FQNQIPNVLLGFFLSSIFVFY.

Belongs to the CobS family. The cofactor is Mg(2+).

The protein resides in the cell inner membrane. It carries out the reaction alpha-ribazole + adenosylcob(III)inamide-GDP = adenosylcob(III)alamin + GMP + H(+). It catalyses the reaction alpha-ribazole 5'-phosphate + adenosylcob(III)inamide-GDP = adenosylcob(III)alamin 5'-phosphate + GMP + H(+). It functions in the pathway cofactor biosynthesis; adenosylcobalamin biosynthesis; adenosylcobalamin from cob(II)yrinate a,c-diamide: step 7/7. Functionally, joins adenosylcobinamide-GDP and alpha-ribazole to generate adenosylcobalamin (Ado-cobalamin). Also synthesizes adenosylcobalamin 5'-phosphate from adenosylcobinamide-GDP and alpha-ribazole 5'-phosphate. The protein is Adenosylcobinamide-GDP ribazoletransferase of Leptospira interrogans serogroup Icterohaemorrhagiae serovar copenhageni (strain Fiocruz L1-130).